The sequence spans 122 residues: Histone H2B type 2-K1 (122 aa).

Residues M1–R30 are disordered. The span at G20–R30 shows a compositional bias: basic residues. Position 31 is an N6-(2-hydroxyisobutyryl)lysine; alternate (K31). K31 carries the N6-(beta-hydroxybutyryl)lysine; alternate modification. The residue at position 31 (K31) is an N6-crotonyllysine; alternate. An N6-glutaryllysine; alternate modification is found at K31. Residue K31 is modified to N6-succinyllysine; alternate. Residue K31 forms a Glycyl lysine isopeptide (Lys-Gly) (interchain with G-Cter in ubiquitin); alternate linkage. S33 carries the phosphoserine modification. N6-(2-hydroxyisobutyryl)lysine; alternate occurs at positions 40, 43, and 54. K40 and K43 each carry N6-glutaryllysine; alternate. The residue at position 40 (K40) is an N6-lactoyllysine; alternate. Position 43 is an N6-methyllysine (K43). K43 carries the N6-methyllysine; alternate modification. Residue K54 is modified to N6,N6-dimethyllysine. The residue at position 54 (K54) is an N6,N6-dimethyllysine; alternate. The residue at position 76 (R76) is a Dimethylated arginine. S81 carries the post-translational modification Phosphoserine. 2 positions are modified to omega-N-methylarginine: R83 and R89. N6-(2-hydroxyisobutyryl)lysine; alternate is present on K105. Residue K105 is modified to N6-glutaryllysine; alternate. K105 is subject to N6-lactoyllysine; alternate. The residue at position 105 (K105) is an N6-methyllysine. Position 105 is an N6-methyllysine; alternate (K105). A glycan (O-linked (GlcNAc) serine) is linked at S109. T112 carries the post-translational modification Phosphothreonine. Residues K113 and K117 each carry the N6-(2-hydroxyisobutyryl)lysine; alternate modification. K113 and K117 each carry N6-(beta-hydroxybutyryl)lysine; alternate. N6-glutaryllysine; alternate is present on residues K113 and K117. N6-succinyllysine; alternate is present on residues K113 and K117. The residue at position 113 (K113) is an N6-lactoyllysine; alternate. An N6-malonyllysine; alternate modification is found at K113. K113 is modified (N6-methylated lysine; alternate). A Glycyl lysine isopeptide (Lys-Gly) (interchain with G-Cter in ubiquitin); alternate cross-link involves residue K117.

Belongs to the histone H2B family. In terms of assembly, the nucleosome is a histone octamer containing two molecules each of H2A, H2B, H3 and H4 assembled in one H3-H4 heterotetramer and two H2A-H2B heterodimers. The octamer wraps approximately 147 bp of DNA.

It localises to the chromosome. Its subcellular location is the nucleus. In terms of biological role, core component of nucleosome. Nucleosomes wrap and compact DNA into chromatin, limiting DNA accessibility to the cellular machineries which require DNA as a template. Histones thereby play a central role in transcription regulation, DNA repair, DNA replication and chromosomal stability. DNA accessibility is regulated via a complex set of post-translational modifications of histones, also called histone code, and nucleosome remodeling. The sequence is that of Histone H2B type 2-K1 from Homo sapiens (Human).